The sequence spans 700 residues: Auxin response factor 18 (700 aa).

Residues 128–230 (FAKTLTQSDA…DLCVGIRRAK (103 aa)) constitute a DNA-binding region (TF-B3). 2 disordered regions span residues 234–254 (VGGP…AAGG) and 560–595 (VKKS…DNLS). Residues 239–250 (FLPPPPPPPPTP) show a composition bias toward pro residues. The segment covering 565–594 (SDGNAENTVNKSNSDVSSPRSNQNGTTDNL) has biased composition (polar residues). One can recognise a PB1 domain in the interval 614 to 697 (TGHCKVFMQS…NILTDTSGDN (84 aa)).

It belongs to the ARF family. Homodimers and heterodimers. Expressed in roots, culms, leaves and young panicles.

The protein resides in the nucleus. In terms of biological role, auxin response factors (ARFs) are transcriptional factors that bind specifically to the DNA sequence 5'-TGTCTC-3' found in the auxin-responsive promoter elements (AuxREs). The protein is Auxin response factor 18 (ARF18) of Oryza sativa subsp. japonica (Rice).